Here is a 201-residue protein sequence, read N- to C-terminus: ATP-dependent dethiobiotin synthetase BioD (201 aa).

11–16 (DVGKTH) provides a ligand contact to ATP. Thr-15 lines the Mg(2+) pocket. The active site involves Lys-31. ATP-binding positions include Asp-40 and 93–96 (ELAG). Mg(2+)-binding residues include Asp-40 and Glu-93.

The protein belongs to the dethiobiotin synthetase family. As to quaternary structure, homodimer. The cofactor is Mg(2+).

It is found in the cytoplasm. It carries out the reaction (7R,8S)-7,8-diammoniononanoate + CO2 + ATP = (4R,5S)-dethiobiotin + ADP + phosphate + 3 H(+). The protein operates within cofactor biosynthesis; biotin biosynthesis; biotin from 7,8-diaminononanoate: step 1/2. In terms of biological role, catalyzes a mechanistically unusual reaction, the ATP-dependent insertion of CO2 between the N7 and N8 nitrogen atoms of 7,8-diaminopelargonic acid (DAPA, also called 7,8-diammoniononanoate) to form a ureido ring. In Campylobacter jejuni subsp. jejuni serotype O:6 (strain 81116 / NCTC 11828), this protein is ATP-dependent dethiobiotin synthetase BioD.